Here is a 141-residue protein sequence, read N- to C-terminus: Hemoglobin subunit alpha-A/Q/R/T (141 aa).

The Globin domain occupies 1 to 141; that stretch reads VLSPADKTNV…VSTVLTSKYR (141 aa). Ser3 bears the Phosphoserine mark. The residue at position 7 (Lys7) is an N6-succinyllysine. Phosphothreonine is present on Thr8. Lys11 is subject to N6-succinyllysine. Lys16 is subject to N6-acetyllysine; alternate. Lys16 carries the post-translational modification N6-succinyllysine; alternate. Tyr24 carries the phosphotyrosine modification. Ser35 bears the Phosphoserine mark. Position 40 is an N6-succinyllysine (Lys40). At Ser49 the chain carries Phosphoserine. An O2-binding site is contributed by His58. His87 serves as a coordination point for heme b. Ser102 bears the Phosphoserine mark. Thr108 is subject to Phosphothreonine. 2 positions are modified to phosphoserine: Ser124 and Ser131. A phosphothreonine mark is found at Thr134 and Thr137. At Ser138 the chain carries Phosphoserine.

Belongs to the globin family. In terms of assembly, heterotetramer of two alpha chains and two beta chains. As to expression, red blood cells.

In terms of biological role, involved in oxygen transport from the lung to the various peripheral tissues. The protein is Hemoglobin subunit alpha-A/Q/R/T of Macaca fascicularis (Crab-eating macaque).